The primary structure comprises 74 residues: Kappa-stichotoxin-Sgt4a (74 aa).

The signal sequence occupies residues 1–22; sequence MKFQVIAAVLLIEFCLCVVVTA. The propeptide occupies 23-39; that stretch reads RMELQDVEDVENGFQKR. A ShKT domain is found at 42–74; the sequence is CIDTIPQSRCTAFQCKHSMKYRLSFCRKTCGTC. Intrachain disulfides connect Cys-42-Cys-74, Cys-51-Cys-67, and Cys-56-Cys-71.

The protein belongs to the sea anemone type 1 potassium channel toxin family. Type 1a subfamily.

Its subcellular location is the secreted. It is found in the nematocyst. Inhibits voltage-gated potassium channels (Kv) with higher potency for Kv1.1/KCNA1 and Kv1.3/KCNA3. The protein is Kappa-stichotoxin-Sgt4a of Stichodactyla gigantea (Giant carpet anemone).